A 253-amino-acid chain; its full sequence is 5-oxoprolinase subunit A (253 aa).

Belongs to the LamB/PxpA family. As to quaternary structure, forms a complex composed of PxpA, PxpB and PxpC.

The enzyme catalyses 5-oxo-L-proline + ATP + 2 H2O = L-glutamate + ADP + phosphate + H(+). Functionally, catalyzes the cleavage of 5-oxoproline to form L-glutamate coupled to the hydrolysis of ATP to ADP and inorganic phosphate. The protein is 5-oxoprolinase subunit A of Bacillus anthracis (strain CDC 684 / NRRL 3495).